Reading from the N-terminus, the 271-residue chain is Tryptophan synthase alpha chain (271 aa).

Catalysis depends on proton acceptor residues E49 and D60.

Belongs to the TrpA family. As to quaternary structure, tetramer of two alpha and two beta chains.

It carries out the reaction (1S,2R)-1-C-(indol-3-yl)glycerol 3-phosphate + L-serine = D-glyceraldehyde 3-phosphate + L-tryptophan + H2O. The protein operates within amino-acid biosynthesis; L-tryptophan biosynthesis; L-tryptophan from chorismate: step 5/5. Functionally, the alpha subunit is responsible for the aldol cleavage of indoleglycerol phosphate to indole and glyceraldehyde 3-phosphate. The chain is Tryptophan synthase alpha chain from Burkholderia multivorans (strain ATCC 17616 / 249).